The chain runs to 599 residues: Glutamine--fructose-6-phosphate aminotransferase [isomerizing] (599 aa).

Cys2 acts as the Nucleophile; for GATase activity in catalysis. Positions 2-223 (CGIIGYIGNE…DRDIVILRKE (222 aa)) constitute a Glutamine amidotransferase type-2 domain. 2 SIS domains span residues 286 to 423 (LGKE…IIGK) and 452 to 589 (IAEE…VDKP). Residue Lys594 is the For Fru-6P isomerization activity of the active site.

Homodimer.

Its subcellular location is the cytoplasm. The enzyme catalyses D-fructose 6-phosphate + L-glutamine = D-glucosamine 6-phosphate + L-glutamate. Catalyzes the first step in hexosamine metabolism, converting fructose-6P into glucosamine-6P using glutamine as a nitrogen source. In Methanococcus maripaludis (strain DSM 14266 / JCM 13030 / NBRC 101832 / S2 / LL), this protein is Glutamine--fructose-6-phosphate aminotransferase [isomerizing] (glmS).